The following is a 749-amino-acid chain: 5-methyltetrahydropteroyltriglutamate--homocysteine methyltransferase (749 aa).

5-methyltetrahydropteroyltri-L-glutamate contacts are provided by residues 15-18 (RELK) and Lys-114. L-homocysteine contacts are provided by residues 425-427 (IGS) and Glu-478. L-methionine-binding positions include 425–427 (IGS) and Glu-478. Trp-555 provides a ligand contact to 5-methyltetrahydropteroyltri-L-glutamate. An L-homocysteine-binding site is contributed by Asp-593. Residue Asp-593 participates in L-methionine binding. Residue Glu-599 participates in 5-methyltetrahydropteroyltri-L-glutamate binding. Zn(2+) contacts are provided by His-636, Cys-638, and Glu-660. The active-site Proton donor is the His-689. Cys-721 is a Zn(2+) binding site.

It belongs to the vitamin-B12 independent methionine synthase family. It depends on Zn(2+) as a cofactor.

It catalyses the reaction 5-methyltetrahydropteroyltri-L-glutamate + L-homocysteine = tetrahydropteroyltri-L-glutamate + L-methionine. It participates in amino-acid biosynthesis; L-methionine biosynthesis via de novo pathway; L-methionine from L-homocysteine (MetE route): step 1/1. Its function is as follows. Catalyzes the transfer of a methyl group from 5-methyltetrahydrofolate to homocysteine resulting in methionine formation. In Streptococcus pneumoniae serotype 19F (strain G54), this protein is 5-methyltetrahydropteroyltriglutamate--homocysteine methyltransferase.